The primary structure comprises 294 residues: Elongation factor Ts (294 aa).

Residues 81–84 (TDFV) are involved in Mg(2+) ion dislocation from EF-Tu.

It belongs to the EF-Ts family.

Its subcellular location is the cytoplasm. Functionally, associates with the EF-Tu.GDP complex and induces the exchange of GDP to GTP. It remains bound to the aminoacyl-tRNA.EF-Tu.GTP complex up to the GTP hydrolysis stage on the ribosome. In Levilactobacillus brevis (strain ATCC 367 / BCRC 12310 / CIP 105137 / JCM 1170 / LMG 11437 / NCIMB 947 / NCTC 947) (Lactobacillus brevis), this protein is Elongation factor Ts.